The primary structure comprises 673 residues: Paralemmin-3 (673 aa).

Coiled-coil stretches lie at residues 4–49 and 75–101; these read SSLY…LRER and GQAQARIRNLEDSLFTLQSQLQLLQSA. 2 disordered regions span residues 49–78 and 99–213; these read RWLMDGAAAVPEPSEDPTSKDPQSPEGQAQ and QSAS…GEAK. Over residues 123–137 the composition is skewed to polar residues; the sequence is LSQSIVEAGSVGQTD. Phosphoserine occurs at positions 124 and 143. Thr-151 is subject to Phosphothreonine. Residues Ser-155, Ser-157, and Ser-260 each carry the phosphoserine modification. Disordered stretches follow at residues 295-343 and 356-673; these read VPEV…SFIW and LLVE…CAVM. Thr-301 is subject to Phosphothreonine. A Phosphoserine modification is found at Ser-325. Residues 327 to 338 show a composition bias toward gly residues; it reads EGDGQGGSGGEE. A phosphoserine mark is found at Ser-375 and Ser-420. Composition is skewed to basic and acidic residues over residues 392–477 and 487–532; these read EAEK…KRGA and GVEK…EKTQ. Residues Ser-544 and Ser-660 each carry the phosphoserine modification. 2 S-palmitoyl cysteine lipidation sites follow: Cys-667 and Cys-669. Position 670 is a cysteine methyl ester (Cys-670). Cys-670 is lipidated: S-farnesyl cysteine. A propeptide spans 671-673 (removed in mature form); it reads AVM.

The protein belongs to the paralemmin family. Interacts with SIGIRR. In terms of processing, palmitoylated on Cys-667 and Cys-669 and prenylated on Cys-670; which is required for membrane association.

Its subcellular location is the cytoplasm. The protein resides in the cell membrane. ATP-binding protein, which may act as a adapter in the Toll-like receptor (TLR) signaling. This Homo sapiens (Human) protein is Paralemmin-3 (PALM3).